Consider the following 25-residue polypeptide: Chlorocatechol 1,2-dioxygenase 1 (25 aa).

Belongs to the intradiol ring-cleavage dioxygenase family. Fe(3+) serves as cofactor.

The enzyme catalyses 3,5-dichlorocatechol + O2 = (2E,4E)-2,4-dichloromuconate + 2 H(+). Its pathway is xenobiotic degradation; 2-(2,4-dichlorophenoxy)propanoate degradation. The chain is Chlorocatechol 1,2-dioxygenase 1 (tfdC) from Delftia acidovorans (Pseudomonas acidovorans).